Here is a 330-residue protein sequence, read N- to C-terminus: GMP reductase (330 aa).

The Thioimidate intermediate role is filled by C180. 209-232 serves as a coordination point for NADP(+); it reads LIADGGIRHNGDIAKSVRFGASMV.

It belongs to the IMPDH/GMPR family. GuaC type 2 subfamily.

It carries out the reaction IMP + NH4(+) + NADP(+) = GMP + NADPH + 2 H(+). Its function is as follows. Catalyzes the irreversible NADPH-dependent deamination of GMP to IMP. It functions in the conversion of nucleobase, nucleoside and nucleotide derivatives of G to A nucleotides, and in maintaining the intracellular balance of A and G nucleotides. The chain is GMP reductase from Lactobacillus gasseri (strain ATCC 33323 / DSM 20243 / BCRC 14619 / CIP 102991 / JCM 1131 / KCTC 3163 / NCIMB 11718 / NCTC 13722 / AM63).